A 799-amino-acid chain; its full sequence is ATP synthase subunit alpha (799 aa).

The tract at residues 1 to 549 is ATP synthase alpha chain; it reads MTDNKNHSLI…EEVSLKPTTE (549 aa). 170–177 contributes to the ATP binding site; it reads GDRQTGKT. The segment at 550–799 is unknown; the sequence is TSEAVQIEEK…KGPSGFTYLK (250 aa).

Belongs to the ATPase alpha/beta chains family. As to quaternary structure, F-type ATPases have 2 components, CF(1) - the catalytic core - and CF(0) - the membrane proton channel. CF(1) has five subunits: alpha(3), beta(3), gamma(1), delta(1), epsilon(1). CF(0) has three main subunits: a(1), b(2) and c(9-12). The alpha and beta chains form an alternating ring which encloses part of the gamma chain. CF(1) is attached to CF(0) by a central stalk formed by the gamma and epsilon chains, while a peripheral stalk is formed by the delta and b chains.

The protein resides in the cell membrane. The enzyme catalyses ATP + H2O + 4 H(+)(in) = ADP + phosphate + 5 H(+)(out). Its function is as follows. Produces ATP from ADP in the presence of a proton gradient across the membrane. The alpha chain is a regulatory subunit. The sequence is that of ATP synthase subunit alpha (atpA) from Ureaplasma parvum serovar 3 (strain ATCC 27815 / 27 / NCTC 11736).